Here is a 343-residue protein sequence, read N- to C-terminus: Anthranilate phosphoribosyltransferase (343 aa).

Residues Gly-84, 87–88 (GD), Thr-92, 94–97 (NIST), 112–120 (KHGNRGVSS), and Ser-124 each bind 5-phospho-alpha-D-ribose 1-diphosphate. Gly-84 is an anthranilate binding site. Position 96 (Ser-96) interacts with Mg(2+). Asn-115 is a binding site for anthranilate. Anthranilate is bound at residue Arg-170. Asp-229 and Glu-230 together coordinate Mg(2+).

This sequence belongs to the anthranilate phosphoribosyltransferase family. In terms of assembly, homodimer. Mg(2+) is required as a cofactor.

It carries out the reaction N-(5-phospho-beta-D-ribosyl)anthranilate + diphosphate = 5-phospho-alpha-D-ribose 1-diphosphate + anthranilate. It functions in the pathway amino-acid biosynthesis; L-tryptophan biosynthesis; L-tryptophan from chorismate: step 2/5. In terms of biological role, catalyzes the transfer of the phosphoribosyl group of 5-phosphorylribose-1-pyrophosphate (PRPP) to anthranilate to yield N-(5'-phosphoribosyl)-anthranilate (PRA). This chain is Anthranilate phosphoribosyltransferase, found in Burkholderia cenocepacia (strain ATCC BAA-245 / DSM 16553 / LMG 16656 / NCTC 13227 / J2315 / CF5610) (Burkholderia cepacia (strain J2315)).